The sequence spans 422 residues: UDP-N-acetylglucosamine 1-carboxyvinyltransferase (422 aa).

22-23 (KN) is a binding site for phosphoenolpyruvate. Arg95 is a binding site for UDP-N-acetyl-alpha-D-glucosamine. Cys119 (proton donor) is an active-site residue. At Cys119 the chain carries 2-(S-cysteinyl)pyruvic acid O-phosphothioketal. Residues 124-128 (RPIDQ), Asp309, and Val331 contribute to the UDP-N-acetyl-alpha-D-glucosamine site.

The protein belongs to the EPSP synthase family. MurA subfamily.

The protein resides in the cytoplasm. It carries out the reaction phosphoenolpyruvate + UDP-N-acetyl-alpha-D-glucosamine = UDP-N-acetyl-3-O-(1-carboxyvinyl)-alpha-D-glucosamine + phosphate. It participates in cell wall biogenesis; peptidoglycan biosynthesis. In terms of biological role, cell wall formation. Adds enolpyruvyl to UDP-N-acetylglucosamine. This Anaeromyxobacter dehalogenans (strain 2CP-C) protein is UDP-N-acetylglucosamine 1-carboxyvinyltransferase.